The sequence spans 415 residues: MFS-type transporter FVEG_12626 (415 aa).

A compositionally biased stretch (basic and acidic residues) spans 1-18; that stretch reads MDPDTEQMRVEKPNHEQP. Residues 1–22 form a disordered region; it reads MDPDTEQMRVEKPNHEQPKPNT. The next 6 helical transmembrane spans lie at 27-47, 63-83, 93-113, 118-138, 151-171, and 178-198; these read GGFK…VGVF, TVSW…PFVG, YLLL…SISS, YILS…YPSF, LALG…PIVV, and IGFG…LLVT. N199 carries N-linked (GlcNAc...) asparagine glycosylation. The next 6 helical transmembrane spans lie at 227–247, 264–284, 290–310, 318–338, 354–374, and 386–406; these read FILT…PITF, YLVS…GYIA, FNVS…LWLP, IAFA…SPAL, TMYA…GALI, and VFAG…RLYI.

The protein belongs to the major facilitator superfamily. Monocarboxylate porter (TC 2.A.1.13) family.

It is found in the membrane. In terms of biological role, MFS-type transporter; part of the Fusarium detoxification of benzoxazolinone cluster 2 (FDB2) involved in the degradation of benzoxazolinones produced by the host plant. Maize, wheat, and rye produce the 2 benzoxazinone phytoanticipins 2,4-dihy-droxy-7-methoxy-1,4-benzoxazin-3-one (DIMBOA) and 2,4-dihydroxy-1,4-benzoxazin-3-one (DIBOA) that, due to their inherent instability once released, spontaneously degrade to the more stable corresponding benzoxazolinones, 6-methoxy-2-benzoxazolinone (MBOA) and 2-benzoxazolinone (BOA), respectively. The sequence is that of MFS-type transporter FVEG_12626 from Gibberella moniliformis (strain M3125 / FGSC 7600) (Maize ear and stalk rot fungus).